Reading from the N-terminus, the 148-residue chain is uncharacterized protein (148 aa).

Residues 3 to 64 (IDDLDRKILS…KLNYEKLGYE (62 aa)) enclose the HTH asnC-type domain. The H-T-H motif DNA-binding region spans 22-41 (YREIAKKLNVAVGTIYNRIK).

This is an uncharacterized protein from Pyrococcus furiosus (strain ATCC 43587 / DSM 3638 / JCM 8422 / Vc1).